A 471-amino-acid polypeptide reads, in one-letter code: Trigger factor (471 aa).

The PPIase FKBP-type domain occupies Gly171–Pro262. The segment at Pro440 to Glu471 is disordered. Positions Thr447–Glu471 are enriched in acidic residues.

This sequence belongs to the FKBP-type PPIase family. Tig subfamily.

It is found in the cytoplasm. The enzyme catalyses [protein]-peptidylproline (omega=180) = [protein]-peptidylproline (omega=0). Its function is as follows. Involved in protein export. Acts as a chaperone by maintaining the newly synthesized protein in an open conformation. Functions as a peptidyl-prolyl cis-trans isomerase. The chain is Trigger factor (tig) from Synechocystis sp. (strain ATCC 27184 / PCC 6803 / Kazusa).